Consider the following 245-residue polypeptide: 3-deoxy-manno-octulosonate cytidylyltransferase (245 aa).

Belongs to the KdsB family.

It is found in the cytoplasm. It carries out the reaction 3-deoxy-alpha-D-manno-oct-2-ulosonate + CTP = CMP-3-deoxy-beta-D-manno-octulosonate + diphosphate. Its pathway is nucleotide-sugar biosynthesis; CMP-3-deoxy-D-manno-octulosonate biosynthesis; CMP-3-deoxy-D-manno-octulosonate from 3-deoxy-D-manno-octulosonate and CTP: step 1/1. It participates in bacterial outer membrane biogenesis; lipopolysaccharide biosynthesis. In terms of biological role, activates KDO (a required 8-carbon sugar) for incorporation into bacterial lipopolysaccharide in Gram-negative bacteria. The chain is 3-deoxy-manno-octulosonate cytidylyltransferase from Acidobacterium capsulatum (strain ATCC 51196 / DSM 11244 / BCRC 80197 / JCM 7670 / NBRC 15755 / NCIMB 13165 / 161).